The chain runs to 252 residues: MKITPVKALTDNYIWMIQHGNHAVCVDPSEPSPVLEFLVRNRLMLAQTWVTHPHPDHEGGAAALWRGYMESPVYGESDIEAATHTVTAGTQFTFGDGQVTVWATPGHTDRHTSYLLETSDGIHVFCGDTLFSAGCGRVFTGTIEQLYDSFQRFNRLPENTLFYPAHEYTAANLDFAAHIEPDNADIQTALKAAAHTPTLPVTLAHERRVNPFLRVDLPHVRDRAEALSGKTLNSSLDTFVALRELKNQYRTK.

7 residues coordinate Zn(2+): histidine 52, histidine 54, aspartate 56, histidine 57, histidine 107, aspartate 128, and histidine 166.

Belongs to the metallo-beta-lactamase superfamily. Glyoxalase II family. As to quaternary structure, monomer. It depends on Zn(2+) as a cofactor.

The enzyme catalyses an S-(2-hydroxyacyl)glutathione + H2O = a 2-hydroxy carboxylate + glutathione + H(+). The protein operates within secondary metabolite metabolism; methylglyoxal degradation; (R)-lactate from methylglyoxal: step 2/2. Thiolesterase that catalyzes the hydrolysis of S-D-lactoyl-glutathione to form glutathione and D-lactic acid. This Neisseria meningitidis serogroup C / serotype 2a (strain ATCC 700532 / DSM 15464 / FAM18) protein is Hydroxyacylglutathione hydrolase.